A 189-amino-acid chain; its full sequence is GTP cyclohydrolase 1 (189 aa).

3 residues coordinate Zn(2+): Cys79, His82, and Cys150.

The protein belongs to the GTP cyclohydrolase I family. As to quaternary structure, homomer.

The catalysed reaction is GTP + H2O = 7,8-dihydroneopterin 3'-triphosphate + formate + H(+). It functions in the pathway cofactor biosynthesis; 7,8-dihydroneopterin triphosphate biosynthesis; 7,8-dihydroneopterin triphosphate from GTP: step 1/1. This chain is GTP cyclohydrolase 1, found in Rickettsia africae (strain ESF-5).